Reading from the N-terminus, the 188-residue chain is uncharacterized protein (188 aa).

Basic and acidic residues predominate over residues 1 to 15 (MVSSKDKIKEELKQE). The interval 1-21 (MVSSKDKIKEELKQEEPEENV) is disordered.

This is an uncharacterized protein from Saccharolobus islandicus (Sulfolobus islandicus).